The chain runs to 594 residues: Protein HOTHEAD (594 aa).

Residues 1–19 (MALKLFLFALLLCLPTSLS) form the signal peptide. 64 to 91 (DYIVIGGGTAGCPLAATLSQNFSVLVLE) is a binding site for FAD. His529 serves as the catalytic Proton acceptor.

This sequence belongs to the GMC oxidoreductase family. The cofactor is FAD. Expressed in roots, leaves, stems, inflorescences and siliques. Found not only in epidermis but also in all sub-epidermal cell layers.

In terms of biological role, probable FAD-dependent enzyme. Involved in regulating post-genital organ fusion. Required to limit cellular interactions between contacting epidermal cells during floral development. The polypeptide is Protein HOTHEAD (HTH) (Arabidopsis thaliana (Mouse-ear cress)).